Consider the following 210-residue polypeptide: MEVKVLNKDGAETGETVELKPVIFEIEPNDHAIYLDVRSIMANQHQGTHKVKTRSEVSGGGRKPYRQKGTGNARRGSSRSPVMIGGGAIFGPKPHDYVVGINKKMKRLARISALSYKAKNNEIIVMEDYVPSEIKTKEVVSFLKSLGLNEKKTLLLMPSKNDVMYKSGRNISKLSILEANKASTYDLLNNKTLLIQKSALETLERSLGVA.

The disordered stretch occupies residues 44–79 (QHQGTHKVKTRSEVSGGGRKPYRQKGTGNARRGSSR).

This sequence belongs to the universal ribosomal protein uL4 family. In terms of assembly, part of the 50S ribosomal subunit.

Functionally, one of the primary rRNA binding proteins, this protein initially binds near the 5'-end of the 23S rRNA. It is important during the early stages of 50S assembly. It makes multiple contacts with different domains of the 23S rRNA in the assembled 50S subunit and ribosome. Forms part of the polypeptide exit tunnel. This is Large ribosomal subunit protein uL4 from Chloroherpeton thalassium (strain ATCC 35110 / GB-78).